The chain runs to 763 residues: ATP-dependent RNA helicase glh-1 (763 aa).

The disordered stretch occupies residues methionine 1 to glycine 30. Residues phenylalanine 18–glycine 30 show a composition bias toward gly residues. 7 repeat units span residues phenylalanine 24–glycine 33, phenylalanine 34–glycine 43, phenylalanine 44–glycine 53, phenylalanine 54–glycine 63, phenylalanine 64–glycine 73, phenylalanine 74–glycine 83, and phenylalanine 84–proline 93. The tract at residues phenylalanine 24–proline 93 is 7 X 10 AA tandem repeats, Gly-rich. CCHC-type zinc fingers lie at residues asparagine 158–glutamate 175 and arginine 183–glutamate 200. The interval histidine 193–aspartate 230 is disordered. Basic and acidic residues predominate over residues threonine 194–arginine 208. Over residues threonine 209–aspartate 230 the composition is skewed to gly residues. 2 consecutive CCHC-type zinc fingers follow at residues methionine 242 to glutamate 259 and arginine 262 to asparagine 279. The Q motif signature appears at lysine 341–glutamine 369. Residues leucine 372–methionine 556 form the Helicase ATP-binding domain. Alanine 385–threonine 392 provides a ligand contact to ATP. The short motif at isoleucine 423–threonine 427 is the Phosphodegron element. The DEAD box motif lies at aspartate 499–aspartate 502. A Helicase C-terminal domain is found at aspartate 592–alanine 739.

Belongs to the DEAD box helicase family. DDX4/VASA subfamily. In terms of assembly, interacts with csn-5; this may prevent glh-1 degradation induced by kgb-1. Interacts with zyx-1. Interacts (via the N-terminal region containing the four CCHC zinc fingers) with pan-1. Interacts with kgb-1; this may promote glh-1 degradation by the proteasome. In terms of processing, phosphorylated by kgb-1 (in vitro); this may be responsible for its degradation by the proteasome.

The protein resides in the cytoplasm. It localises to the cytoplasmic granule. The protein localises to the perinuclear region. The enzyme catalyses ATP + H2O = ADP + phosphate + H(+). In terms of biological role, probable ATP-binding RNA helicase. May act redundantly with the P-granule component glh-4 to regulate the formation of the granular structure of P-granules in embryos. Plays a role in positively regulating the localization of pgl-1 to P-granules. May play a role in transgenerational epigenetic inheritance. May protect somatic cells from excessive apoptosis during normal development. The chain is ATP-dependent RNA helicase glh-1 from Caenorhabditis elegans.